The primary structure comprises 197 residues: Large ribosomal subunit protein bL25 (197 aa).

Belongs to the bacterial ribosomal protein bL25 family. CTC subfamily. As to quaternary structure, part of the 50S ribosomal subunit; part of the 5S rRNA/L5/L18/L25 subcomplex. Contacts the 5S rRNA. Binds to the 5S rRNA independently of L5 and L18.

Its function is as follows. This is one of the proteins that binds to the 5S RNA in the ribosome where it forms part of the central protuberance. In Hydrogenobaculum sp. (strain Y04AAS1), this protein is Large ribosomal subunit protein bL25.